The following is an 88-amino-acid chain: Small ribosomal subunit protein uS15 (88 aa).

Belongs to the universal ribosomal protein uS15 family. In terms of assembly, part of the 30S ribosomal subunit. Forms a bridge to the 50S subunit in the 70S ribosome, contacting the 23S rRNA.

Its function is as follows. One of the primary rRNA binding proteins, it binds directly to 16S rRNA where it helps nucleate assembly of the platform of the 30S subunit by binding and bridging several RNA helices of the 16S rRNA. In terms of biological role, forms an intersubunit bridge (bridge B4) with the 23S rRNA of the 50S subunit in the ribosome. This is Small ribosomal subunit protein uS15 from Borrelia hermsii (strain HS1 / DAH).